The sequence spans 66 residues: Kappa-flavitoxin (66 aa).

Intrachain disulfides connect cysteine 3/cysteine 21, cysteine 14/cysteine 42, cysteine 27/cysteine 31, cysteine 46/cysteine 58, and cysteine 59/cysteine 64.

The protein belongs to the three-finger toxin family. Long-chain subfamily. Kappa-neurotoxin sub-subfamily. Homo- and heterodimer; non-covalently linked. Expressed by the venom gland.

Its subcellular location is the secreted. Postsynaptic neurotoxin that binds and inhibits neuronal nicotinic acetylcholine receptors (nAChR) with high affinity (IC(50)&lt;100 nM). Is a selective, and slowly reversible antagonist of alpha-3/CHRNA3-containing and some alpha-4/CHRNA4-containing AChRs. The protein is Kappa-flavitoxin of Bungarus flaviceps flaviceps (Red-headed krait).